The chain runs to 323 residues: Aspartate carbamoyltransferase catalytic subunit (323 aa).

The carbamoyl phosphate site is built by Arg55 and Thr56. L-aspartate is bound at residue Lys83. Residues Arg105, His138, and Gln141 each contribute to the carbamoyl phosphate site. Residues Arg181 and Arg235 each coordinate L-aspartate. Residues Gly276 and Pro277 each coordinate carbamoyl phosphate.

Belongs to the aspartate/ornithine carbamoyltransferase superfamily. ATCase family. Heterododecamer (2C3:3R2) of six catalytic PyrB chains organized as two trimers (C3), and six regulatory PyrI chains organized as three dimers (R2).

The catalysed reaction is carbamoyl phosphate + L-aspartate = N-carbamoyl-L-aspartate + phosphate + H(+). The protein operates within pyrimidine metabolism; UMP biosynthesis via de novo pathway; (S)-dihydroorotate from bicarbonate: step 2/3. Functionally, catalyzes the condensation of carbamoyl phosphate and aspartate to form carbamoyl aspartate and inorganic phosphate, the committed step in the de novo pyrimidine nucleotide biosynthesis pathway. This is Aspartate carbamoyltransferase catalytic subunit from Corynebacterium aurimucosum (strain ATCC 700975 / DSM 44827 / CIP 107346 / CN-1) (Corynebacterium nigricans).